The chain runs to 305 residues: Ornithine carbamoyltransferase (305 aa).

Residues 52–55, Q79, R103, and 130–133 each bind carbamoyl phosphate; these read STRT and HPCQ. Residues N161, D221, and 225 to 226 contribute to the L-ornithine site; that span reads SM. Carbamoyl phosphate is bound by residues 261 to 262 and R289; that span reads CL.

The protein belongs to the aspartate/ornithine carbamoyltransferase superfamily. OTCase family.

The protein resides in the cytoplasm. It carries out the reaction carbamoyl phosphate + L-ornithine = L-citrulline + phosphate + H(+). It functions in the pathway amino-acid biosynthesis; L-arginine biosynthesis; L-arginine from L-ornithine and carbamoyl phosphate: step 1/3. Its function is as follows. Reversibly catalyzes the transfer of the carbamoyl group from carbamoyl phosphate (CP) to the N(epsilon) atom of ornithine (ORN) to produce L-citrulline. The protein is Ornithine carbamoyltransferase of Methanocorpusculum labreanum (strain ATCC 43576 / DSM 4855 / Z).